The sequence spans 479 residues: UPF0164 protein TP_0865 (479 aa).

The signal sequence occupies residues 1–49 (MVRMRRRRACSSGGACGCAAVRGARSFLSVRVLGMRIGMSALCLAPLFA).

It belongs to the UPF0164 family.

This is UPF0164 protein TP_0865 from Treponema pallidum (strain Nichols).